A 40-amino-acid polypeptide reads, in one-letter code: Putative NAD(P)-dependent glyceraldehyde-3-phosphate dehydrogenase PS5 (40 aa).

The protein is Putative NAD(P)-dependent glyceraldehyde-3-phosphate dehydrogenase PS5 of Pinus strobus (Eastern white pine).